A 409-amino-acid polypeptide reads, in one-letter code: Glutamate--tRNA ligase 2 (409 aa).

Positions 9 to 19 match the 'HIGH' region motif; the sequence is PSPTGNLHIGG. The short motif at 198 to 202 is the 'KMSKS' region element; it reads KLSKR. An ATP-binding site is contributed by lysine 201.

It belongs to the class-I aminoacyl-tRNA synthetase family. Glutamate--tRNA ligase type 1 subfamily. Monomer.

Its subcellular location is the cytoplasm. It catalyses the reaction tRNA(Glu) + L-glutamate + ATP = L-glutamyl-tRNA(Glu) + AMP + diphosphate. Catalyzes the attachment of glutamate to tRNA(Glu) in a two-step reaction: glutamate is first activated by ATP to form Glu-AMP and then transferred to the acceptor end of tRNA(Glu). The sequence is that of Glutamate--tRNA ligase 2 from Neorickettsia sennetsu (strain ATCC VR-367 / Miyayama) (Ehrlichia sennetsu).